A 211-amino-acid polypeptide reads, in one-letter code: Ribonuclease HII (211 aa).

In terms of domain architecture, RNase H type-2 spans 21–211 (SSIAGLDEAG…APLKSMFDVI (191 aa)). Positions 27, 28, and 122 each coordinate a divalent metal cation.

This sequence belongs to the RNase HII family. The cofactor is Mn(2+). Mg(2+) serves as cofactor.

It localises to the cytoplasm. It carries out the reaction Endonucleolytic cleavage to 5'-phosphomonoester.. Its function is as follows. Endonuclease that specifically degrades the RNA of RNA-DNA hybrids. The sequence is that of Ribonuclease HII from Dehalococcoides mccartyi (strain ATCC BAA-2266 / KCTC 15142 / 195) (Dehalococcoides ethenogenes (strain 195)).